Here is a 152-residue protein sequence, read N- to C-terminus: Small ribosomal subunit protein uS17A (152 aa).

Belongs to the universal ribosomal protein uS17 family. Component of the small ribosomal subunit (SSU). Mature yeast ribosomes consist of a small (40S) and a large (60S) subunit. The 40S small subunit contains 1 molecule of ribosomal RNA (18S rRNA) and at least 33 different proteins. The large 60S subunit contains 3 rRNA molecules (25S, 5.8S and 5S rRNA) and at least 46 different proteins.

It localises to the cytoplasm. It is found in the nucleus. Component of the ribosome, a large ribonucleoprotein complex responsible for the synthesis of proteins in the cell. The small ribosomal subunit (SSU) binds messenger RNAs (mRNAs) and translates the encoded message by selecting cognate aminoacyl-transfer RNA (tRNA) molecules. The large subunit (LSU) contains the ribosomal catalytic site termed the peptidyl transferase center (PTC), which catalyzes the formation of peptide bonds, thereby polymerizing the amino acids delivered by tRNAs into a polypeptide chain. The nascent polypeptides leave the ribosome through a tunnel in the LSU and interact with protein factors that function in enzymatic processing, targeting, and the membrane insertion of nascent chains at the exit of the ribosomal tunnel. The chain is Small ribosomal subunit protein uS17A (rps1101) from Schizosaccharomyces pombe (strain 972 / ATCC 24843) (Fission yeast).